We begin with the raw amino-acid sequence, 73 residues long: Small ribosomal subunit protein bS18c (73 aa).

It belongs to the bacterial ribosomal protein bS18 family. As to quaternary structure, part of the 30S ribosomal subunit.

The protein resides in the plastid. The protein localises to the chloroplast. This is Small ribosomal subunit protein bS18c from Nephroselmis olivacea (Green alga).